Here is a 258-residue protein sequence, read N- to C-terminus: Tryptophan synthase alpha chain (258 aa).

Catalysis depends on proton acceptor residues glutamate 52 and aspartate 63.

It belongs to the TrpA family. Tetramer of two alpha and two beta chains.

The catalysed reaction is (1S,2R)-1-C-(indol-3-yl)glycerol 3-phosphate + L-serine = D-glyceraldehyde 3-phosphate + L-tryptophan + H2O. The protein operates within amino-acid biosynthesis; L-tryptophan biosynthesis; L-tryptophan from chorismate: step 5/5. Functionally, the alpha subunit is responsible for the aldol cleavage of indoleglycerol phosphate to indole and glyceraldehyde 3-phosphate. This is Tryptophan synthase alpha chain from Streptococcus pneumoniae serotype 19F (strain G54).